Reading from the N-terminus, the 435-residue chain is ATP-dependent protease ATPase subunit HslU (435 aa).

ATP is bound by residues Val-18, 60–65 (GVGKTE), Asp-248, Glu-313, and Arg-385.

It belongs to the ClpX chaperone family. HslU subfamily. As to quaternary structure, a double ring-shaped homohexamer of HslV is capped on each side by a ring-shaped HslU homohexamer. The assembly of the HslU/HslV complex is dependent on binding of ATP.

It localises to the cytoplasm. ATPase subunit of a proteasome-like degradation complex; this subunit has chaperone activity. The binding of ATP and its subsequent hydrolysis by HslU are essential for unfolding of protein substrates subsequently hydrolyzed by HslV. HslU recognizes the N-terminal part of its protein substrates and unfolds these before they are guided to HslV for hydrolysis. In Rhodospirillum rubrum (strain ATCC 11170 / ATH 1.1.1 / DSM 467 / LMG 4362 / NCIMB 8255 / S1), this protein is ATP-dependent protease ATPase subunit HslU.